A 572-amino-acid chain; its full sequence is Cleavage stimulation factor subunit 2 (572 aa).

Phosphoserine is present on Ser14. Residues 16–94 (RSVFVGNIPY…RALRVDNAAS (79 aa)) enclose the RRM domain. Residues 108 to 248 (APVIESPYGE…VNGAPPLMQA (141 aa)) form an interactions with CSTF3 and SYMPK region. Residue Lys189 forms a Glycyl lysine isopeptide (Lys-Gly) (interchain with G-Cter in SUMO2) linkage. The segment at 208–230 (VHSAGPGSGSSVSMNQQNPQTPQ) is disordered. Position 308 is an omega-N-methylarginine (Arg308). The tract at residues 322–382 (LGDAPNDPRG…RGGPLTEPRP (61 aa)) is disordered. The segment covering 360-373 (PGHDSRGPPPHEMR) has biased composition (basic and acidic residues). The 1; approximate repeat unit spans residues 410 to 414 (IDARA). Residues 410-464 (IDARAMEARGLDARGLEARAMEARAMEARAMEARAMEARAMEVRGMEARSMDTRG) are 11 X 5 AA tandem repeats of M-E-A-R-[AG]. Copy 2 of the repeat occupies 415 to 419 (MEARG). One copy of the 3; approximate repeat lies at 420–424 (LDARG). One copy of the 4; approximate repeat lies at 425 to 429 (LEARA). 4 consecutive repeat copies span residues 430–434 (MEARA), 435–439 (MEARA), 440–444 (MEARA), and 445–449 (MEARA). One copy of the 9; approximate repeat lies at 450-454 (MEVRG). Repeat 10 spans residues 455–459 (MEARS). An 11; approximate repeat occupies 460 to 464 (MDTRG). Arg463 and Arg470 each carry omega-N-methylarginine. Residues 509–572 (IQGGGQPGGF…EQIQKSTGAP (64 aa)) form an interaction with RPO2TC1 region. Ser519 carries the phosphoserine modification.

The CSTF complex is composed of CSTF1 (50 kDa subunit), CSTF2 (64 kDa subunit) and CSTF3 (77 kDa subunit). CSTF2 directly interacts with CSTF3, SYMPK and RPO2TC1. Interacts with HSF1 in heat-stressed cells. Interacts with CPSF2, CPSF3 and FIP1L1. Interacts with DDX1.

It localises to the nucleus. In terms of biological role, one of the multiple factors required for polyadenylation and 3'-end cleavage of mammalian pre-mRNAs. This subunit is directly involved in the binding to pre-mRNAs. The sequence is that of Cleavage stimulation factor subunit 2 (CSTF2) from Bos taurus (Bovine).